A 127-amino-acid chain; its full sequence is Large ribosomal subunit protein bL12 (127 aa).

It belongs to the bacterial ribosomal protein bL12 family. Homodimer. Part of the ribosomal stalk of the 50S ribosomal subunit. Forms a multimeric L10(L12)X complex, where L10 forms an elongated spine to which 2 to 4 L12 dimers bind in a sequential fashion. Binds GTP-bound translation factors.

Its function is as follows. Forms part of the ribosomal stalk which helps the ribosome interact with GTP-bound translation factors. Is thus essential for accurate translation. The chain is Large ribosomal subunit protein bL12 from Syntrophotalea carbinolica (strain DSM 2380 / NBRC 103641 / GraBd1) (Pelobacter carbinolicus).